A 411-amino-acid polypeptide reads, in one-letter code: ATPase family AAA domain-containing protein 3C (411 aa).

177-184 (GPPGTGKT) is an ATP binding site.

The protein belongs to the AAA ATPase family.

In Homo sapiens (Human), this protein is ATPase family AAA domain-containing protein 3C (ATAD3C).